The primary structure comprises 309 residues: Calcium homeostasis modulator protein 5 (309 aa).

The Cytoplasmic segment spans residues 1–15 (MDAFQSILKFFLNQK). Residues 16 to 37 (TAIGYSFMALLTVGSERLFSLV) traverse the membrane as a helical segment. Positions 32 and 37 each coordinate a 1,2-diacyl-sn-glycero-3-phosphate. The Extracellular portion of the chain corresponds to 38 to 45 (AFKCPCSI). 3 disulfides stabilise this stretch: Cys41–Cys127, Cys43–Cys158, and Cys142–Cys149. The helical transmembrane segment at 46–70 (ENTAYGLVFLFAPAWVLLILGFFLN) threads the bilayer. Residues 71 to 99 (NKAWRLFTGCCMNPQKIFPRRRCCRFFYV) are Cytoplasmic-facing. The chain crosses the membrane as a helical span at residues 100–129 (LGHITLSSLVAPVMWLSVALLNGTFYECAM). Asn121 contacts a 1,2-diacyl-sn-glycero-3-phosphate. Residues 130 to 174 (SGTRSTRLLEMICKGKPKECWEELHKVSCGKSSMAAMDSEEVRLS) lie on the Extracellular side of the membrane. Residues 175–200 (LQAQSQILGWCLICSASFFSLLTTCY) traverse the membrane as a helical segment. Topologically, residues 201–309 (ARCRSKVSYL…MILVGTAQSL (109 aa)) are cytoplasmic. Arg202 contacts a 1,2-diacyl-sn-glycero-3-phosphate.

Belongs to the CALHM family. Oligomerizes to form undecameric cone-shaped channels.

It localises to the membrane. Functionally, may assemble to form large pore channels with gating and ion conductance likely regulated by membrane lipids. The polypeptide is Calcium homeostasis modulator protein 5 (Rattus norvegicus (Rat)).